Here is a 119-residue protein sequence, read N- to C-terminus: Holo-[acyl-carrier-protein] synthase (119 aa).

D8 and E58 together coordinate Mg(2+).

It belongs to the P-Pant transferase superfamily. AcpS family. It depends on Mg(2+) as a cofactor.

The protein resides in the cytoplasm. It carries out the reaction apo-[ACP] + CoA = holo-[ACP] + adenosine 3',5'-bisphosphate + H(+). In terms of biological role, transfers the 4'-phosphopantetheine moiety from coenzyme A to a Ser of acyl-carrier-protein. The chain is Holo-[acyl-carrier-protein] synthase from Bacillus cereus (strain ZK / E33L).